A 235-amino-acid polypeptide reads, in one-letter code: Lipoprotein signal peptidase (235 aa).

The interval 1-23 (MTDETSGPAEPVTDAPGDAESPA) is disordered. 3 helical membrane passes run 31–51 (LLLT…VLAV), 84–104 (GYTW…IWMG), and 108–128 (VSPW…GNLV). Catalysis depends on residues aspartate 144 and aspartate 158. A helical membrane pass occupies residues 156–176 (VADPSVVGGAILLVALSLFGF). Residues 185 to 235 (RPGEDAEPSAGASDSTPEAPAADGPDKPAGPVGPEDAAEESKTVGHQAEPS) form a disordered region. Low complexity predominate over residues 201–218 (PEAPAADGPDKPAGPVGP).

Belongs to the peptidase A8 family.

It localises to the cell membrane. The enzyme catalyses Release of signal peptides from bacterial membrane prolipoproteins. Hydrolyzes -Xaa-Yaa-Zaa-|-(S,diacylglyceryl)Cys-, in which Xaa is hydrophobic (preferably Leu), and Yaa (Ala or Ser) and Zaa (Gly or Ala) have small, neutral side chains.. It functions in the pathway protein modification; lipoprotein biosynthesis (signal peptide cleavage). Functionally, this protein specifically catalyzes the removal of signal peptides from prolipoproteins. The chain is Lipoprotein signal peptidase from Mycolicibacterium smegmatis (strain ATCC 700084 / mc(2)155) (Mycobacterium smegmatis).